The chain runs to 121 residues: Large ribosomal subunit protein uL18 (121 aa).

This sequence belongs to the universal ribosomal protein uL18 family. Part of the 50S ribosomal subunit; part of the 5S rRNA/L5/L18/L25 subcomplex. Contacts the 5S and 23S rRNAs.

In terms of biological role, this is one of the proteins that bind and probably mediate the attachment of the 5S RNA into the large ribosomal subunit, where it forms part of the central protuberance. This chain is Large ribosomal subunit protein uL18, found in Geobacter metallireducens (strain ATCC 53774 / DSM 7210 / GS-15).